Here is a 67-residue protein sequence, read N- to C-terminus: Protein AaeX (67 aa).

The next 2 membrane-spanning stretches (helical) occupy residues 3-23 (VLPV…EIIV) and 43-63 (LVWH…YVVS).

It belongs to the AaeX family.

Its subcellular location is the cell membrane. This chain is Protein AaeX, found in Erwinia tasmaniensis (strain DSM 17950 / CFBP 7177 / CIP 109463 / NCPPB 4357 / Et1/99).